The chain runs to 466 residues: ATP synthase subunit beta (466 aa).

ATP is bound at residue 152–159 (GGAGVGKT).

It belongs to the ATPase alpha/beta chains family. As to quaternary structure, F-type ATPases have 2 components, CF(1) - the catalytic core - and CF(0) - the membrane proton channel. CF(1) has five subunits: alpha(3), beta(3), gamma(1), delta(1), epsilon(1). CF(0) has three main subunits: a(1), b(2) and c(9-12). The alpha and beta chains form an alternating ring which encloses part of the gamma chain. CF(1) is attached to CF(0) by a central stalk formed by the gamma and epsilon chains, while a peripheral stalk is formed by the delta and b chains.

The protein localises to the cell inner membrane. The catalysed reaction is ATP + H2O + 4 H(+)(in) = ADP + phosphate + 5 H(+)(out). Produces ATP from ADP in the presence of a proton gradient across the membrane. The catalytic sites are hosted primarily by the beta subunits. In Helicobacter acinonychis (strain Sheeba), this protein is ATP synthase subunit beta.